Reading from the N-terminus, the 345-residue chain is Nuclear distribution protein nudE-like 1-A (345 aa).

Residues 19–190 (WRELSKRLKQ…LAVRERQTDG (172 aa)) are a coiled coil. Basic and acidic residues predominate over residues 182–192 (AVRERQTDGTR). 2 disordered regions span residues 182–206 (AVRERQTDGTRKSAPSSPTLDCDKT) and 326–345 (PPGVLGSRPPSPPGMLPLSV). Over residues 334 to 345 (PPSPPGMLPLSV) the composition is skewed to pro residues.

It belongs to the nudE family. Post-translationally, phosphorylated in mitosis.

It localises to the cytoplasm. The protein localises to the cytoskeleton. It is found in the microtubule organizing center. Its subcellular location is the centrosome. The protein resides in the spindle. In terms of biological role, required for organization of the cellular microtubule array and microtubule anchoring at the centrosome. Positively regulates the activity of the minus-end directed microtubule motor protein dynein. May enhance dynein-mediated microtubule sliding by targeting dynein to the microtubule plus end. Positively regulates lysosome peripheral distribution and ruffled border formation in osteoclasts. This is Nuclear distribution protein nudE-like 1-A (ndel1-a) from Xenopus laevis (African clawed frog).